A 338-amino-acid polypeptide reads, in one-letter code: Ketol-acid reductoisomerase (NADP(+)) (338 aa).

The KARI N-terminal Rossmann domain maps to 1–181 (MQVYYDKDCD…GGGRTGIIET (181 aa)). Residues 24 to 27 (YGSQ), Arg-47, Ser-50, Ser-52, and 82 to 85 (DEFQ) each bind NADP(+). His-107 is an active-site residue. Residue Gly-133 coordinates NADP(+). The KARI C-terminal knotted domain maps to 182–327 (TFKDETETDL…EKLRGMMPWI (146 aa)). Residues Asp-190, Glu-194, Glu-226, and Glu-230 each coordinate Mg(2+). Residue Ser-251 coordinates substrate.

Belongs to the ketol-acid reductoisomerase family. Mg(2+) is required as a cofactor.

It catalyses the reaction (2R)-2,3-dihydroxy-3-methylbutanoate + NADP(+) = (2S)-2-acetolactate + NADPH + H(+). The enzyme catalyses (2R,3R)-2,3-dihydroxy-3-methylpentanoate + NADP(+) = (S)-2-ethyl-2-hydroxy-3-oxobutanoate + NADPH + H(+). The protein operates within amino-acid biosynthesis; L-isoleucine biosynthesis; L-isoleucine from 2-oxobutanoate: step 2/4. It functions in the pathway amino-acid biosynthesis; L-valine biosynthesis; L-valine from pyruvate: step 2/4. Functionally, involved in the biosynthesis of branched-chain amino acids (BCAA). Catalyzes an alkyl-migration followed by a ketol-acid reduction of (S)-2-acetolactate (S2AL) to yield (R)-2,3-dihydroxy-isovalerate. In the isomerase reaction, S2AL is rearranged via a Mg-dependent methyl migration to produce 3-hydroxy-3-methyl-2-ketobutyrate (HMKB). In the reductase reaction, this 2-ketoacid undergoes a metal-dependent reduction by NADPH to yield (R)-2,3-dihydroxy-isovalerate. The chain is Ketol-acid reductoisomerase (NADP(+)) from Alcanivorax borkumensis (strain ATCC 700651 / DSM 11573 / NCIMB 13689 / SK2).